We begin with the raw amino-acid sequence, 287 residues long: MPIIKTAGIISKPNSTAAEEIVPKLIEWLRRRGIAVRIDEQTSLYSGGVSGMPREEVPQSCDLVVVLGGDGTLLSAARAIGRREIPLFPVNLGGLGFLTAISIEELYPELERALRGEHRIAKRKLMTTEVIRENNVIASFDALNDAVLTKSSIARMIDLDTYVDEQFVCAYKADGLIIATPTGSTAYSLSAGGPIIFPSVPAICLTPICPHMLTNRPVLVPETSVIRVASRGPDESVYLTIDGQVGTPIREHDTVVCHSSHHSLLLIRPPRMMFFDVLRQKLKWGER.

The active-site Proton acceptor is aspartate 70. Residues 70–71, 144–145, arginine 155, lysine 172, aspartate 174, 185–190, and glutamine 244 contribute to the NAD(+) site; these read DG, ND, and TAYSLS.

Belongs to the NAD kinase family. It depends on a divalent metal cation as a cofactor.

Its subcellular location is the cytoplasm. The enzyme catalyses NAD(+) + ATP = ADP + NADP(+) + H(+). Involved in the regulation of the intracellular balance of NAD and NADP, and is a key enzyme in the biosynthesis of NADP. Catalyzes specifically the phosphorylation on 2'-hydroxyl of the adenosine moiety of NAD to yield NADP. The polypeptide is NAD kinase (Solibacter usitatus (strain Ellin6076)).